The sequence spans 500 residues: NAD(P)H-quinone oxidoreductase subunit 2, chloroplastic (500 aa).

A run of 13 helical transmembrane segments spans residues 15–35 (ILPE…DLSL), 42–62 (WIIY…CLQW), 79–99 (FSIA…LLSI), 109–129 (LMEF…LCGA), 132–152 (LITI…LAGY), 167–187 (LLVG…LYGL), 201–221 (LIFA…CIIV), 247–267 (VVAF…IRII), 278–298 (WQFL…LVAI), 306–326 (MLAY…ISST), 334–354 (LVYM…VILF), 377–397 (ASCL…AGFF), and 400–420 (IYLF…VGLL).

It belongs to the complex I subunit 2 family. NDH is composed of at least 16 different subunits, 5 of which are encoded in the nucleus.

It localises to the plastid. Its subcellular location is the chloroplast thylakoid membrane. It carries out the reaction a plastoquinone + NADH + (n+1) H(+)(in) = a plastoquinol + NAD(+) + n H(+)(out). It catalyses the reaction a plastoquinone + NADPH + (n+1) H(+)(in) = a plastoquinol + NADP(+) + n H(+)(out). NDH shuttles electrons from NAD(P)H:plastoquinone, via FMN and iron-sulfur (Fe-S) centers, to quinones in the photosynthetic chain and possibly in a chloroplast respiratory chain. The immediate electron acceptor for the enzyme in this species is believed to be plastoquinone. Couples the redox reaction to proton translocation, and thus conserves the redox energy in a proton gradient. The chain is NAD(P)H-quinone oxidoreductase subunit 2, chloroplastic from Chaetosphaeridium globosum (Charophycean green alga).